A 280-amino-acid polypeptide reads, in one-letter code: 4-diphosphocytidyl-2-C-methyl-D-erythritol kinase (280 aa).

Residue Lys-8 is part of the active site. An ATP-binding site is contributed by 91-101; it reads PVAAGLAGGST. Residue Asp-133 is part of the active site.

The protein belongs to the GHMP kinase family. IspE subfamily.

The catalysed reaction is 4-CDP-2-C-methyl-D-erythritol + ATP = 4-CDP-2-C-methyl-D-erythritol 2-phosphate + ADP + H(+). The protein operates within isoprenoid biosynthesis; isopentenyl diphosphate biosynthesis via DXP pathway; isopentenyl diphosphate from 1-deoxy-D-xylulose 5-phosphate: step 3/6. Functionally, catalyzes the phosphorylation of the position 2 hydroxy group of 4-diphosphocytidyl-2C-methyl-D-erythritol. This Clostridium botulinum (strain ATCC 19397 / Type A) protein is 4-diphosphocytidyl-2-C-methyl-D-erythritol kinase.